A 29-amino-acid chain; its full sequence is GWTLNSAGYLLGPHAIDNHRSFNDKHGLA.

Alanine amide is present on alanine 29.

The protein belongs to the galanin family.

It is found in the secreted. Functionally, contracts smooth muscle of the gastrointestinal and genitourinary tract, regulates growth hormone release, modulates insulin release, and may be involved in the control of adrenal secretion. This Pelophylax ridibundus (Marsh frog) protein is Galanin (gal).